We begin with the raw amino-acid sequence, 170 residues long: Flavin reductase (170 aa).

NAD(+) is bound by residues Ser51, His138, and 159–162 (FYRG).

The protein belongs to the non-flavoprotein flavin reductase family. Homodimer. Likely forms a loose transient complex with monooxygenases for which it provides FMNH(2).

It catalyses the reaction FMNH2 + NAD(+) = FMN + NADH + 2 H(+). The enzyme catalyses FADH2 + NAD(+) = FAD + NADH + 2 H(+). Its function is as follows. Catalyzes the reduction of FMN, and to a lesser extent, FAD, using NADH as an electron donor. Is able to provide the FMNH(2) required for the Baeyer-Villiger oxidations catalyzed by 2,5-diketocamphane monooxygenases and 3,6-diketocamphane monooxygenase. NADPH acts as a very poor cosubstrate. This chain is Flavin reductase, found in Pseudomonas putida (Arthrobacter siderocapsulatus).